The sequence spans 255 residues: Putative cysteine-rich repeat secretory protein 13 (255 aa).

The signal sequence occupies residues 1–21 (MSSNILAMVAMQLLLIRIVSS). Gnk2-homologous domains follow at residues 28-136 (YLNH…SVNT) and 142-252 (YDSF…LYPF).

The protein belongs to the cysteine-rich repeat secretory protein family.

The protein resides in the secreted. This Arabidopsis thaliana (Mouse-ear cress) protein is Putative cysteine-rich repeat secretory protein 13 (CRRSP13).